We begin with the raw amino-acid sequence, 368 residues long: PPE family immunomodulator PPE68 (368 aa).

2 disordered regions span residues 255–280 (LGTS…LLRA) and 312–368 (AAAG…EDDW). Positions 312-327 (AAAGSSATGGAAPVGA) are enriched in low complexity. Residues 354 to 368 (REEDDEDDWDEEDDW) show a composition bias toward acidic residues.

It belongs to the mycobacterial PPE family. Homodimer. Interacts with PE35. PE35/PPE68 complex interacts with human TLR2.

The protein resides in the secreted. The protein localises to the cell wall. Its subcellular location is the cell membrane. It localises to the cell surface. In terms of biological role, plays a major role in RD1-associated pathogenesis, and may contribute to the establishment and maintenance of M.tuberculosis infection. Together with PE35, stimulates the secretion of IL-10 and MCP-1 from human macrophages, via the interaction with human Toll-like receptor 2 (TLR2). This Mycobacterium tuberculosis (strain CDC 1551 / Oshkosh) protein is PPE family immunomodulator PPE68 (PPE68).